A 363-amino-acid chain; its full sequence is MLKVGSSLLAADGGGLSPRFALGLAQFVSANLAAGRELVIVSSGAVAAGRAILPKAMDVGAPIAARQALAALGQAQLIALWQRFFERPVAQVLLTHDDLRNRRRYLNARATLGELLRLGALPVINENDTVSVDELKLGDNDNLAAIVAALVDADALFIATDIDGLYSADPRSNPLARPLDDVPELTPEVLAMAGGSGSNVGTGGMRTKLEAAAKAGAAGIETYLFNGRSGEVVRALALDRLRGTRIHAARTRIAARKYWLRHAPVEAGAILIDDGAAAALTGKGASLLPGGVAGAQGDFRRGDMVEIRRRDTTGDGQCLARGVSQYSALDIRRIAGRHSREIENVLGYSYGENVVHRDDLVVL.

K3 contributes to the ATP binding site. Residues S43, D128, and N140 each coordinate substrate. Residues 160–161 (TD) and 202–208 (TGGMRTK) each bind ATP. The PUA domain maps to 267–349 (AGAILIDDGA…REIENVLGYS (83 aa)).

The protein belongs to the glutamate 5-kinase family.

Its subcellular location is the cytoplasm. The enzyme catalyses L-glutamate + ATP = L-glutamyl 5-phosphate + ADP. It participates in amino-acid biosynthesis; L-proline biosynthesis; L-glutamate 5-semialdehyde from L-glutamate: step 1/2. Catalyzes the transfer of a phosphate group to glutamate to form L-glutamate 5-phosphate. This is Glutamate 5-kinase from Xanthomonas axonopodis pv. citri (strain 306).